The primary structure comprises 285 residues: Bifunctional protein FolD 2 (285 aa).

NADP(+)-binding positions include 164 to 166 (GRS), serine 189, and valine 230.

The protein belongs to the tetrahydrofolate dehydrogenase/cyclohydrolase family. In terms of assembly, homodimer.

The enzyme catalyses (6R)-5,10-methylene-5,6,7,8-tetrahydrofolate + NADP(+) = (6R)-5,10-methenyltetrahydrofolate + NADPH. It carries out the reaction (6R)-5,10-methenyltetrahydrofolate + H2O = (6R)-10-formyltetrahydrofolate + H(+). It functions in the pathway one-carbon metabolism; tetrahydrofolate interconversion. Catalyzes the oxidation of 5,10-methylenetetrahydrofolate to 5,10-methenyltetrahydrofolate and then the hydrolysis of 5,10-methenyltetrahydrofolate to 10-formyltetrahydrofolate. In Geobacter metallireducens (strain ATCC 53774 / DSM 7210 / GS-15), this protein is Bifunctional protein FolD 2.